Reading from the N-terminus, the 245-residue chain is Eukaryotic translation initiation factor 6 (245 aa).

Phosphotyrosine is present on Tyr-113. Thr-165 carries the post-translational modification Phosphothreonine. Ser-166 is subject to Phosphoserine. Ser-174 and Ser-175 each carry phosphoserine; by CK1. Ser-235 carries the post-translational modification Phosphoserine; by PKC. Phosphoserine is present on residues Ser-239 and Ser-243.

Belongs to the eIF-6 family. In terms of assembly, monomer. Associates with the 60S ribosomal subunit. Interacts with RACK1. Interacts with DICER1, AGO2, TARBP2, MOV10 and RPL7A; they form a large RNA-induced silencing complex (RISC). In terms of processing, phosphorylation at Ser-174 and Ser-175 by CSNK1D/CK1 promotes nuclear export. Ufmylated by UFL1.

The protein localises to the cytoplasm. It localises to the nucleus. It is found in the nucleolus. In terms of biological role, binds to the 60S ribosomal subunit and prevents its association with the 40S ribosomal subunit to form the 80S initiation complex in the cytoplasm. Behaves as a stimulatory translation initiation factor downstream insulin/growth factors. Is also involved in ribosome biogenesis. Associates with pre-60S subunits in the nucleus and is involved in its nuclear export. Cytoplasmic release of TIF6 from 60S subunits and nuclear relocalization is promoted by a RACK1 (RACK1)-dependent protein kinase C activity. In tissues responsive to insulin, controls fatty acid synthesis and glycolysis by exerting translational control of adipogenic transcription factors such as CEBPB, CEBPD and ATF4 that have G/C rich or uORF in their 5'UTR. Required for ROS-dependent megakaryocyte maturation and platelets formation, controls the expression of mitochondrial respiratory chain genes involved in reactive oxygen species (ROS) synthesis. Involved in miRNA-mediated gene silencing by the RNA-induced silencing complex (RISC). Required for both miRNA-mediated translational repression and miRNA-mediated cleavage of complementary mRNAs by RISC. Modulates cell cycle progression and global translation of pre-B cells, its activation seems to be rate-limiting in tumorigenesis and tumor growth. In Bos taurus (Bovine), this protein is Eukaryotic translation initiation factor 6.